Consider the following 116-residue polypeptide: SPbeta prophage-derived uncharacterized protein YomQ (116 aa).

In Bacillus subtilis (strain 168), this protein is SPbeta prophage-derived uncharacterized protein YomQ (yomQ).